The sequence spans 71 residues: Exodeoxyribonuclease 7 small subunit (71 aa).

Belongs to the XseB family. As to quaternary structure, heterooligomer composed of large and small subunits.

It localises to the cytoplasm. The enzyme catalyses Exonucleolytic cleavage in either 5'- to 3'- or 3'- to 5'-direction to yield nucleoside 5'-phosphates.. Bidirectionally degrades single-stranded DNA into large acid-insoluble oligonucleotides, which are then degraded further into small acid-soluble oligonucleotides. The protein is Exodeoxyribonuclease 7 small subunit of Streptococcus agalactiae serotype Ia (strain ATCC 27591 / A909 / CDC SS700).